The following is a 170-amino-acid chain: Transcription factor E (170 aa).

Residues 1–93 (MKDVYLYIVE…TWYVDDEIIK (93 aa)) form the HTH TFE/IIEalpha-type domain.

The protein belongs to the TFE family. In terms of assembly, monomer. Interaction with RNA polymerase subunits RpoF and RpoE is necessary for Tfe stimulatory transcription activity. Able to interact with Tbp and RNA polymerase in the absence of DNA promoter. Interacts both with the preinitiation and elongation complexes.

Transcription factor that plays a role in the activation of archaeal genes transcribed by RNA polymerase. Facilitates transcription initiation by enhancing TATA-box recognition by TATA-box-binding protein (Tbp), and transcription factor B (Tfb) and RNA polymerase recruitment. Not absolutely required for transcription in vitro, but particularly important in cases where Tbp or Tfb function is not optimal. It dynamically alters the nucleic acid-binding properties of RNA polymerases by stabilizing the initiation complex and destabilizing elongation complexes. Seems to translocate with the RNA polymerase following initiation and acts by binding to the non template strand of the transcription bubble in elongation complexes. In Pyrobaculum aerophilum (strain ATCC 51768 / DSM 7523 / JCM 9630 / CIP 104966 / NBRC 100827 / IM2), this protein is Transcription factor E.